We begin with the raw amino-acid sequence, 283 residues long: ATP phosphoribosyltransferase (283 aa).

This sequence belongs to the ATP phosphoribosyltransferase family. Long subfamily. Equilibrium between an active dimeric form, an inactive hexameric form and higher aggregates. Interconversion between the various forms is largely reversible and is influenced by the natural substrates and inhibitors of the enzyme. Mg(2+) serves as cofactor.

It localises to the cytoplasm. It carries out the reaction 1-(5-phospho-beta-D-ribosyl)-ATP + diphosphate = 5-phospho-alpha-D-ribose 1-diphosphate + ATP. It functions in the pathway amino-acid biosynthesis; L-histidine biosynthesis; L-histidine from 5-phospho-alpha-D-ribose 1-diphosphate: step 1/9. Its activity is regulated as follows. Feedback inhibited by histidine. Its function is as follows. Catalyzes the condensation of ATP and 5-phosphoribose 1-diphosphate to form N'-(5'-phosphoribosyl)-ATP (PR-ATP). Has a crucial role in the pathway because the rate of histidine biosynthesis seems to be controlled primarily by regulation of HisG enzymatic activity. In Mycobacterium sp. (strain JLS), this protein is ATP phosphoribosyltransferase.